Consider the following 320-residue polypeptide: uncharacterized protein (320 aa).

7 consecutive transmembrane segments (helical) span residues 107 to 127 (LSKE…AGIY), 131 to 151 (VALL…IALS), 169 to 189 (LIAE…YLPI), 200 to 220 (ITLD…GSLS), 228 to 248 (IAVG…FGLL), 260 to 280 (ALIL…VIFS), and 299 to 319 (TLYA…LIIY).

The protein localises to the cell membrane. This is an uncharacterized protein from Methanocaldococcus jannaschii (strain ATCC 43067 / DSM 2661 / JAL-1 / JCM 10045 / NBRC 100440) (Methanococcus jannaschii).